We begin with the raw amino-acid sequence, 231 residues long: 5'-methylthioadenosine/S-adenosylhomocysteine nucleosidase (231 aa).

Glutamate 12 functions as the Proton acceptor in the catalytic mechanism. Substrate contacts are provided by residues glycine 78, methionine 153, and 174 to 175; that span reads ME. Aspartate 198 (proton donor) is an active-site residue.

It belongs to the PNP/UDP phosphorylase family. MtnN subfamily.

The enzyme catalyses S-adenosyl-L-homocysteine + H2O = S-(5-deoxy-D-ribos-5-yl)-L-homocysteine + adenine. It catalyses the reaction S-methyl-5'-thioadenosine + H2O = 5-(methylsulfanyl)-D-ribose + adenine. It carries out the reaction 5'-deoxyadenosine + H2O = 5-deoxy-D-ribose + adenine. It functions in the pathway amino-acid biosynthesis; L-methionine biosynthesis via salvage pathway; S-methyl-5-thio-alpha-D-ribose 1-phosphate from S-methyl-5'-thioadenosine (hydrolase route): step 1/2. Functionally, catalyzes the irreversible cleavage of the glycosidic bond in both 5'-methylthioadenosine (MTA) and S-adenosylhomocysteine (SAH/AdoHcy) to adenine and the corresponding thioribose, 5'-methylthioribose and S-ribosylhomocysteine, respectively. Also cleaves 5'-deoxyadenosine, a toxic by-product of radical S-adenosylmethionine (SAM) enzymes, into 5-deoxyribose and adenine. The polypeptide is 5'-methylthioadenosine/S-adenosylhomocysteine nucleosidase (Bacillus anthracis (strain A0248)).